Reading from the N-terminus, the 216-residue chain is ATP phosphoribosyltransferase (216 aa).

It belongs to the ATP phosphoribosyltransferase family. Short subfamily. Heteromultimer composed of HisG and HisZ subunits.

Its subcellular location is the cytoplasm. The enzyme catalyses 1-(5-phospho-beta-D-ribosyl)-ATP + diphosphate = 5-phospho-alpha-D-ribose 1-diphosphate + ATP. It participates in amino-acid biosynthesis; L-histidine biosynthesis; L-histidine from 5-phospho-alpha-D-ribose 1-diphosphate: step 1/9. Its function is as follows. Catalyzes the condensation of ATP and 5-phosphoribose 1-diphosphate to form N'-(5'-phosphoribosyl)-ATP (PR-ATP). Has a crucial role in the pathway because the rate of histidine biosynthesis seems to be controlled primarily by regulation of HisG enzymatic activity. This chain is ATP phosphoribosyltransferase, found in Prochlorococcus marinus (strain MIT 9211).